A 248-amino-acid polypeptide reads, in one-letter code: DNA repair protein RecO (248 aa).

It belongs to the RecO family.

In terms of biological role, involved in DNA repair and RecF pathway recombination. The polypeptide is DNA repair protein RecO (Bacillus cereus (strain B4264)).